A 348-amino-acid polypeptide reads, in one-letter code: Phenylalanine--tRNA ligase alpha subunit (348 aa).

Glu-259 contributes to the Mg(2+) binding site.

The protein belongs to the class-II aminoacyl-tRNA synthetase family. Phe-tRNA synthetase alpha subunit type 1 subfamily. Tetramer of two alpha and two beta subunits. It depends on Mg(2+) as a cofactor.

The protein resides in the cytoplasm. It catalyses the reaction tRNA(Phe) + L-phenylalanine + ATP = L-phenylalanyl-tRNA(Phe) + AMP + diphosphate + H(+). This Ligilactobacillus salivarius (strain UCC118) (Lactobacillus salivarius) protein is Phenylalanine--tRNA ligase alpha subunit.